The sequence spans 296 residues: Phosphatidylglycerol--prolipoprotein diacylglyceryl transferase (296 aa).

4 helical membrane-spanning segments follow: residues 10 to 30 (IAFS…LAAF), 57 to 77 (LLFY…MLFY), 92 to 112 (VWEG…ACGL), and 119 to 139 (LHFF…LGFG). A 1,2-diacyl-sn-glycero-3-phospho-(1'-sn-glycerol) is bound at residue arginine 140. 3 helical membrane-spanning segments follow: residues 194-214 (QLYE…TFSM), 220-240 (YAVS…VEFV), and 255-275 (LTMG…LLAL).

This sequence belongs to the Lgt family.

The protein localises to the cell inner membrane. It carries out the reaction L-cysteinyl-[prolipoprotein] + a 1,2-diacyl-sn-glycero-3-phospho-(1'-sn-glycerol) = an S-1,2-diacyl-sn-glyceryl-L-cysteinyl-[prolipoprotein] + sn-glycerol 1-phosphate + H(+). The protein operates within protein modification; lipoprotein biosynthesis (diacylglyceryl transfer). In terms of biological role, catalyzes the transfer of the diacylglyceryl group from phosphatidylglycerol to the sulfhydryl group of the N-terminal cysteine of a prolipoprotein, the first step in the formation of mature lipoproteins. This is Phosphatidylglycerol--prolipoprotein diacylglyceryl transferase from Xanthomonas campestris pv. campestris (strain 8004).